Reading from the N-terminus, the 473-residue chain is Photosystem II CP43 reaction center protein (473 aa).

The propeptide occupies 1-14; sequence MKILYSLRRYFHVE. Thr-15 carries the post-translational modification N-acetylthreonine. The residue at position 15 (Thr-15) is a Phosphothreonine. 5 helical membrane passes run 69 to 93, 134 to 155, 178 to 200, 255 to 275, and 291 to 312; these read LFEV…PHLA, LIGP…KDKN, KAIW…RKIT, KPFA…LSYS, and WFNN…ASQA. Glu-367 contacts [CaMn4O5] cluster. Residues 447–471 form a helical membrane-spanning segment; it reads RARAAAAGFEKGIDRDSEPVLYMEP.

The protein belongs to the PsbB/PsbC family. PsbC subfamily. As to quaternary structure, PSII is composed of 1 copy each of membrane proteins PsbA, PsbB, PsbC, PsbD, PsbE, PsbF, PsbH, PsbI, PsbJ, PsbK, PsbL, PsbM, PsbT, PsbX, PsbY, PsbZ, Psb30/Ycf12, at least 3 peripheral proteins of the oxygen-evolving complex and a large number of cofactors. It forms dimeric complexes. The cofactor is Binds multiple chlorophylls and provides some of the ligands for the Ca-4Mn-5O cluster of the oxygen-evolving complex. It may also provide a ligand for a Cl- that is required for oxygen evolution. PSII binds additional chlorophylls, carotenoids and specific lipids..

Its subcellular location is the plastid. The protein resides in the chloroplast thylakoid membrane. In terms of biological role, one of the components of the core complex of photosystem II (PSII). It binds chlorophyll and helps catalyze the primary light-induced photochemical processes of PSII. PSII is a light-driven water:plastoquinone oxidoreductase, using light energy to abstract electrons from H(2)O, generating O(2) and a proton gradient subsequently used for ATP formation. This chain is Photosystem II CP43 reaction center protein, found in Chara vulgaris (Common stonewort).